The primary structure comprises 553 residues: Glutamate--tRNA ligase (553 aa).

The 'HIGH' region motif lies at Pro-103 to His-113.

Belongs to the class-I aminoacyl-tRNA synthetase family. Glutamate--tRNA ligase type 2 subfamily.

The protein resides in the cytoplasm. It catalyses the reaction tRNA(Glu) + L-glutamate + ATP = L-glutamyl-tRNA(Glu) + AMP + diphosphate. Catalyzes the attachment of glutamate to tRNA(Glu) in a two-step reaction: glutamate is first activated by ATP to form Glu-AMP and then transferred to the acceptor end of tRNA(Glu). The sequence is that of Glutamate--tRNA ligase from Methanothermobacter thermautotrophicus (strain ATCC 29096 / DSM 1053 / JCM 10044 / NBRC 100330 / Delta H) (Methanobacterium thermoautotrophicum).